A 454-amino-acid chain; its full sequence is MSGTRASNDRSSHPGAGGHKRPRYDVGNKVTVVLGAQWGDEGKGKVVDLLAMDSDIICRCQGGNNAGHTVVVEGKEYDFHLFPSGIINPKAISFIGNGVVIHLPGLFEEADKNEKKGLKDWEKRLIISDRAHIVCDFHQAVDGLQEVQRQAQEGKNIGTTKKGIGPTYSSKASRTGLRICDLLSDFDEFSARFKNLAHQYQSMFSNLEVDVDGQLKKLKMYAEKIRPMVRDGVYFMYDALHGSPKKILVEGANAALLDIDFGTYPFVTSSNCTVGGVCTGLGIPPQNVGNVYGVVKAYTTRVGIGAFPTEQINESGTLLQTRGHEWGVTTGRKRRCGWLDLVILRYAHMINGFTALALTKLDILDVLDEIKVGVAYRLNGKRIPYFPANQEILQKIEVEYEVMPGWKSDTTGARKWDDLPTKAQNYIRFVETHIGVPVKWVGVGKSRESMIELF.

The tract at residues 1–24 is disordered; that stretch reads MSGTRASNDRSSHPGAGGHKRPRY. GTP-binding positions include 39–45 and 67–69; these read GDEGKGK and GHT. Asp40 functions as the Proton acceptor in the catalytic mechanism. Residues Asp40 and Gly67 each contribute to the Mg(2+) site. Asp40 contributes to the substrate binding site. IMP is bound by residues 40–43, 65–68, Thr160, Arg174, Asn253, Thr268, and Arg332; these read DEGK and NAGH. His68 acts as the Proton donor in catalysis. 328-334 serves as a coordination point for substrate; sequence VTTGRKR. GTP is bound by residues Arg334, 360 to 362, and 442 to 445; these read KLD and GVGK.

This sequence belongs to the adenylosuccinate synthetase family. Homodimer. Mg(2+) serves as cofactor.

It is found in the cytoplasm. The enzyme catalyses IMP + L-aspartate + GTP = N(6)-(1,2-dicarboxyethyl)-AMP + GDP + phosphate + 2 H(+). Its pathway is purine metabolism; AMP biosynthesis via de novo pathway; AMP from IMP: step 1/2. Functionally, component of the purine nucleotide cycle (PNC), which interconverts IMP and AMP to regulate the nucleotide levels in various tissues, and which contributes to glycolysis and ammoniagenesis. Catalyzes the first committed step in the biosynthesis of AMP from IMP. The protein is Adenylosuccinate synthetase isozyme 1 B (adss1-b) of Xenopus laevis (African clawed frog).